The sequence spans 288 residues: Protease HtpX (288 aa).

Helical transmembrane passes span 4–24 (VMLF…VLNI) and 36–56 (LSGL…ISLM). His-143 contributes to the Zn(2+) binding site. Glu-144 is a catalytic residue. His-147 lines the Zn(2+) pocket. 2 consecutive transmembrane segments (helical) span residues 151–171 (GDMV…IFLS) and 193–213 (MVYF…ASFI). Residue Glu-222 coordinates Zn(2+).

The protein belongs to the peptidase M48B family. Requires Zn(2+) as cofactor.

Its subcellular location is the cell inner membrane. The sequence is that of Protease HtpX from Vibrio vulnificus (strain YJ016).